Reading from the N-terminus, the 362-residue chain is Chorismate synthase (362 aa).

Residues Arg-48 and Arg-54 each contribute to the NADP(+) site. Residues 125–127 (RSS), 241–242 (NA), Gly-286, 301–305 (KPTSS), and Arg-327 each bind FMN.

The protein belongs to the chorismate synthase family. Homotetramer. The cofactor is FMNH2.

The enzyme catalyses 5-O-(1-carboxyvinyl)-3-phosphoshikimate = chorismate + phosphate. It participates in metabolic intermediate biosynthesis; chorismate biosynthesis; chorismate from D-erythrose 4-phosphate and phosphoenolpyruvate: step 7/7. In terms of biological role, catalyzes the anti-1,4-elimination of the C-3 phosphate and the C-6 proR hydrogen from 5-enolpyruvylshikimate-3-phosphate (EPSP) to yield chorismate, which is the branch point compound that serves as the starting substrate for the three terminal pathways of aromatic amino acid biosynthesis. This reaction introduces a second double bond into the aromatic ring system. The sequence is that of Chorismate synthase from Paramagnetospirillum magneticum (strain ATCC 700264 / AMB-1) (Magnetospirillum magneticum).